Consider the following 146-residue polypeptide: DNA-directed RNA polymerases II, IV and V subunit 8B (146 aa).

The protein belongs to the eukaryotic RPB8 RNA polymerase subunit family. As to quaternary structure, component of the RNA polymerase II, IV and V complexes. Associates with the mediator complex.

The protein resides in the nucleus. DNA-dependent RNA polymerase catalyzes the transcription of DNA into RNA using the four ribonucleoside triphosphates as substrates. Component of RNA polymerase II which synthesizes mRNA precursors and many functional non-coding RNAs. Pol II is the central component of the basal RNA polymerase II transcription machinery. It is composed of mobile elements that move relative to each other. Component of RNA polymerases IV and V which mediate short-interfering RNAs (siRNA) accumulation and subsequent RNA-directed DNA methylation-dependent (RdDM) transcriptional gene silencing (TGS) of endogenous repeated sequences, including transposable elements. This is DNA-directed RNA polymerases II, IV and V subunit 8B (NRPB8B) from Arabidopsis thaliana (Mouse-ear cress).